The sequence spans 452 residues: tRNA modification GTPase MnmE (452 aa).

Arginine 21, glutamate 78, and lysine 118 together coordinate (6S)-5-formyl-5,6,7,8-tetrahydrofolate. A TrmE-type G domain is found at 214-375; sequence GMKVVIAGRP…LRDHLKQAMG (162 aa). Asparagine 224 provides a ligand contact to K(+). GTP-binding positions include 224 to 229, 243 to 249, and 268 to 271; these read NAGKSS, TDIAGTT, and DTAG. Serine 228 lines the Mg(2+) pocket. The K(+) site is built by threonine 243, isoleucine 245, and threonine 248. Residue threonine 249 coordinates Mg(2+). Lysine 452 is a (6S)-5-formyl-5,6,7,8-tetrahydrofolate binding site.

The protein belongs to the TRAFAC class TrmE-Era-EngA-EngB-Septin-like GTPase superfamily. TrmE GTPase family. Homodimer. Heterotetramer of two MnmE and two MnmG subunits. K(+) is required as a cofactor.

It localises to the cytoplasm. In terms of biological role, exhibits a very high intrinsic GTPase hydrolysis rate. Involved in the addition of a carboxymethylaminomethyl (cmnm) group at the wobble position (U34) of certain tRNAs, forming tRNA-cmnm(5)s(2)U34. This chain is tRNA modification GTPase MnmE, found in Haemophilus influenzae (strain 86-028NP).